The primary structure comprises 152 residues: Transcriptional repressor NrdR (152 aa).

The segment at 3-34 is a zinc-finger region; it reads CPYCQHPDSDVIDTRKLHNGETIRRRRKCEAC. The region spanning 49–139 is the ATP-cone domain; sequence ITVVKKNGER…VYRSFADIGK (91 aa).

Belongs to the NrdR family. Zn(2+) is required as a cofactor.

Its function is as follows. Negatively regulates transcription of bacterial ribonucleotide reductase nrd genes and operons by binding to NrdR-boxes. The polypeptide is Transcriptional repressor NrdR (Roseiflexus castenholzii (strain DSM 13941 / HLO8)).